The chain runs to 337 residues: Ketol-acid reductoisomerase (NADP(+)) (337 aa).

The KARI N-terminal Rossmann domain maps to 3-183; the sequence is VEMFYDDDAD…GGTRAGVIKT (181 aa). NADP(+)-binding positions include 26–29, Lys-49, Ser-52, Ser-54, and 84–87; these read YGSQ and DTAQ. Residue His-109 is part of the active site. Gly-135 lines the NADP(+) pocket. The 146-residue stretch at 184–329 folds into the KARI C-terminal knotted domain; it reads TFKEETETDL…KKLRDLMSWV (146 aa). Mg(2+) is bound by residues Asp-192, Glu-196, Glu-228, and Glu-232. Ser-253 provides a ligand contact to substrate.

Belongs to the ketol-acid reductoisomerase family. It depends on Mg(2+) as a cofactor.

The catalysed reaction is (2R)-2,3-dihydroxy-3-methylbutanoate + NADP(+) = (2S)-2-acetolactate + NADPH + H(+). The enzyme catalyses (2R,3R)-2,3-dihydroxy-3-methylpentanoate + NADP(+) = (S)-2-ethyl-2-hydroxy-3-oxobutanoate + NADPH + H(+). It participates in amino-acid biosynthesis; L-isoleucine biosynthesis; L-isoleucine from 2-oxobutanoate: step 2/4. Its pathway is amino-acid biosynthesis; L-valine biosynthesis; L-valine from pyruvate: step 2/4. Functionally, involved in the biosynthesis of branched-chain amino acids (BCAA). Catalyzes an alkyl-migration followed by a ketol-acid reduction of (S)-2-acetolactate (S2AL) to yield (R)-2,3-dihydroxy-isovalerate. In the isomerase reaction, S2AL is rearranged via a Mg-dependent methyl migration to produce 3-hydroxy-3-methyl-2-ketobutyrate (HMKB). In the reductase reaction, this 2-ketoacid undergoes a metal-dependent reduction by NADPH to yield (R)-2,3-dihydroxy-isovalerate. The polypeptide is Ketol-acid reductoisomerase (NADP(+)) (Rhodococcus jostii (strain RHA1)).